Reading from the N-terminus, the 308-residue chain is GTPase IMAP family member 5 (308 aa).

The Cytoplasmic segment spans residues 1–283 (MEHLQKSTYG…VKSCWSSHTA (283 aa)). One can recognise an AIG1-type G domain in the interval 24 to 227 (SSCLRILLVG…HSNDLFLHAE (204 aa)). GTP-binding positions include 33–41 (GKSGCGKSA), S54, 151–153 (RKE), and N188. Residues 284–304 (ACALLIVLGLTLLTTFINLCI) form a helical; Anchor for type IV membrane protein membrane-spanning segment. Over 305 to 308 (SRCK) the chain is Mitochondrial intermembrane.

Belongs to the TRAFAC class TrmE-Era-EngA-EngB-Septin-like GTPase superfamily. AIG1/Toc34/Toc159-like paraseptin GTPase family. IAN subfamily. In terms of assembly, interacts with BAD, BAK1, BAX, BCL2, BCL2L1/Bcl-xL and BCL2L11/BimEL. The interaction with BAX is increased, when cells initiate apoptosis upon IL2 withdrawal. Forms a complex with BCL2L1 or MCL1 and HSPA8/HSC70; the interaction between HSPA8 and BCL2L1 or MCL1 is impaired in the absence of GIMAP5. May interact (via N-terminus) with microtubules. In terms of tissue distribution, expressed in thymus (in thymocytes), spleen (in splenocytes), lymph node and lung. Highly expressed in T lymphocytes. Expressed in B cells and in distinct lineages of hematopoietic bone marrow cells, including natural killer, B, T, myeloid and erythroid lineages. Expressed in liver endothelial cells.

The protein resides in the lysosome. Its subcellular location is the lysosome membrane. It localises to the endosome. The protein localises to the multivesicular body membrane. It is found in the endosome membrane. Its function is as follows. Plays a role in T lymphocyte development and the optimal generation of CD4/CD8 double-positive thymocytes. Inhibitor of GSK3A. May act by sequestering GSK3A in cytoplasmic vesicles and impairing its translocation to the nucleus. Consequently, impairs GSK3A-dependent transcriptional program and regulation of the DNA damage response occurring during T cells proliferation. Required for the survival of bone marrow hematopoietic stem cells, as well as of peripheral T cells, natural killer (NK) and NK T-cell development and the maintenance of normal liver function. May promote the survival of mature T lymphocytes upon cytokine withdrawal. May regulate Ca(2+) homeostasis by modulating lysosomal Ca(2+) stores, preventing its accumulation in the absence of T cell activation. May play a role in mitochondrial DNA segregation in hematopoietic tissues. Is a regulator of liver endothelial cell homeostasis. This is GTPase IMAP family member 5 (Gimap5) from Mus musculus (Mouse).